The primary structure comprises 2434 residues: ATP-binding cassette sub-family A member 2 (2434 aa).

Residue Asn14 is glycosylated (N-linked (GlcNAc...) asparagine). The next 2 helical transmembrane spans lie at 22-42 (PWVL…LLGL) and 54-74 (AFYT…QSLC). 3 N-linked (GlcNAc...) asparagine glycosylation sites follow: Asn89, Asn168, and Asn173. Residue Gln271 is modified to N5-methylglutamine. N-linked (GlcNAc...) asparagine glycans are attached at residues Asn305, Asn368, Asn379, Asn420, Asn432, Asn476, Asn484, Asn494, Asn530, Asn549, Asn590, Asn600, and Asn628. The segment covering 354-369 (RAPAPQAGSPSGPANS) has biased composition (low complexity). A disordered region spans residues 354–396 (RAPAPQAGSPSGPANSTGVGANTGPNTTVEEGTQSPVTPASPD). A compositionally biased stretch (polar residues) spans 370–396 (TGVGANTGPNTTVEEGTQSPVTPASPD). 6 helical membrane-spanning segments follow: residues 699 to 719 (FLFV…VYSV), 750 to 770 (VAWF…LTAI), 782 to 802 (VLII…FCFL), 813 to 833 (ASAC…YVAI), 857 to 877 (AFGL…GIQW), and 893 to 913 (LLAV…TWYI). In terms of domain architecture, ABC transporter 1 spans 990-1221 (VCVDKLTKVY…YGDGYRLTLV (232 aa)). Residue 1024 to 1031 (GHNGAGKT) participates in ATP binding. The tract at residues 1225–1246 (AEPGTSQEPGMASSPSGRPQLS) is disordered. Positions 1228-1246 (GTSQEPGMASSPSGRPQLS) are enriched in polar residues. Ser1238 is modified (phosphoserine). Residue Asn1247 is glycosylated (N-linked (GlcNAc...) asparagine). A phosphoserine mark is found at Ser1327 and Ser1331. Residues 1461–1481 (ILLPAFFVCVAMTVALSVPEI) traverse the membrane as a helical segment. N-linked (GlcNAc...) asparagine glycosylation is found at Asn1496, Asn1549, and Asn1557. Residues 1587–1606 (NFVPPPPSPAPSDSPLSPDE) are disordered. Residues 1589–1598 (VPPPPSPAPS) are compositionally biased toward pro residues. Residues Asn1613, Asn1678, and Asn1776 are each glycosylated (N-linked (GlcNAc...) asparagine). 5 helical membrane-spanning segments follow: residues 1793 to 1813 (VVIA…FVVF), 1842 to 1862 (VWDM…LFVF), 1873 to 1893 (FPAV…IMYP), 1906 to 1926 (VFLI…TFLL), and 1992 to 2012 (GLVA…MCQY). The 236-residue stretch at 2051-2286 (VKIENLTKVY…FGDGYMITVR (236 aa)) folds into the ABC transporter 2 domain. Asn2055 is a glycosylation site (N-linked (GlcNAc...) asparagine). 2088 to 2095 (GVNGAGKT) lines the ATP pocket. A Phosphothreonine modification is found at Thr2411.

This sequence belongs to the ABC transporter superfamily. ABCA family. N-glycosylated. Post-translationally, methylated at Gln-271 by N6AMT1. In terms of tissue distribution, expressed at high levels in brain, at moderate levels in heart, kidney and lung, and at low levels in skeletal muscle, stomach, spleen, colon and pancreas. Not detected in the liver or small intestine. In brain, highly expressed in white matter and detected in oligodendrocytes. Expressed in cerebellum as well as the anterior commissure. Expressed mainly in the white matter but is also scattered in gray matter throughout the whole brain. Expressed in myelinating cells of both ventral and dorsal restricted regions in newborn spinal cord. Expressed in non-myelin-forming as well as in myelin-forming Schwann cells in the sciatic nerve.

The protein localises to the endosome membrane. Its subcellular location is the lysosome membrane. In terms of biological role, probable transporter, its natural substrate has not been found yet. May have a role in macrophage lipid metabolism and neural development. May play a role in myelination, perhaps as a transporter for certain kinds of myelin chemical components. May play an important role in gamma-secretase processing of APP and thus in amyloid-beta peptide generation. Regulates esterification of plasma membrane cholesterol by modulation of sphingolipid metabolism. Probable lipid transporter that modulates cholesterol sequestration in the late endosome/lysosome by regulating the intracellular sphingolipid metabolism, in turn participates in cholesterol homeostasis. May alter the transbilayer distribution of ceramide in the intraluminal membrane lipid bilayer, favoring its retention in the outer leaflet that results in increased acid ceramidase activity in the late endosome/lysosome, facilitating ceramide deacylation to sphingosine leading to the sequestration of free cholesterol in lysosomes. In addition regulates amyloid-beta production either by activating a signaling pathway that regulates amyloid precursor protein transcription through the modulation of sphingolipid metabolism or through its role in gamma-secretase processing of APP. May play a role in myelin formation. The protein is ATP-binding cassette sub-family A member 2 of Rattus norvegicus (Rat).